The chain runs to 131 residues: Putative protein PTGES3L (131 aa).

Positions 3-91 constitute a CS domain; the sequence is RQPARTLWYD…KEKVAWPRLT (89 aa).

This sequence belongs to the p23/wos2 family.

The polypeptide is Putative protein PTGES3L (Ptges3l) (Mus musculus (Mouse)).